The sequence spans 275 residues: Probable siderophore transport system ATP-binding protein YusV (275 aa).

The ABC transporter domain occupies 6 to 242 (ISTETLSLGY…DLVQNVFSMN (237 aa)). ATP is bound at residue 38-45 (GSNGCGKS).

Belongs to the ABC transporter superfamily. In terms of assembly, the iron-hydroxamate siderophore complex is composed of one ATP-binding protein (YusV), two transmembrane proteins (YfiZ and YfhA) and a solute-binding protein (YfiY); the catechoplate siderophore complex is composed of one ATP-binding protein (YusV), two transmembrane proteins (FeuB and FeuC) and a solute-binding protein (FeuA).

Its subcellular location is the cell membrane. Its function is as follows. Provides the ATPase subunit for at least 2 ABC transporter complexes; YfiYZ/YfhA/YusV involved in import of the iron-hydroxamate siderophores schizokinen, arthrobactin and corprogen, and FeuABC/YusV involved in import of the catecholate siderophores bacillibactin and enterobactin. Probably responsible for energy coupling to the transport system. The protein is Probable siderophore transport system ATP-binding protein YusV (yusV) of Bacillus subtilis (strain 168).